The primary structure comprises 1544 residues: GATOR complex protein Iml1 (1544 aa).

Disordered stretches follow at residues 615–649 (QAVP…CENG) and 1037–1072 (RRHS…EKRP). Polar residues-rich tracts occupy residues 623-639 (QAGQ…NNNN) and 1041-1057 (TSII…TNSP). A compositionally biased stretch (basic and acidic residues) spans 1058 to 1072 (FRERVGSNRLPEKRP).

It belongs to the IML1 family. In terms of assembly, component of the GATOR complex consisting of mio, Nup44A/Seh1, Im11, Nplr3, Nplr2, Wdr24, Wdr59 and Sec13. Within the GATOR complex, probable component of the GATOR1 subcomplex which is likely composed of Iml1, Nplr2 and Nplr3.

Functionally, an essential component of the GATOR subcomplex GATOR1 which functions as an inhibitor of the amino acid-sensing branch of the TORC1 signaling pathway. The two GATOR subcomplexes, GATOR1 and GATOR2, regulate the TORC1 pathway in order to mediate metabolic homeostasis, female gametogenesis and the response to amino acid limitation and complete starvation. The function of GATOR1 in negatively regulating the TORC1 pathway is essential for maintaining baseline levels of TORC1 activity under nutrient rich conditions, and for promoting survival during amino acid or complete starvation by inhibiting TORC1-dependent cell growth and promoting catabolic metabolism and autophagy. GATOR1 and GATOR2 act at different stages of oogenesis to regulate TORC1 in order to control meiotic entry and promote oocyte growth and development. After exactly four mitotic cyst divisions, the GATOR1 complex members (Iml1, Nprl2 and Nprl3) down-regulate TORC1 to slow cellular metabolism and promote the mitotic/meiotic transition. At later stages of oogenesis, the mio and Nup44A components of the GATOR2 complex inhibit GATOR1 and thus activate TORC1 to promote meiotic progression, and drive oocyte growth and development. This Drosophila melanogaster (Fruit fly) protein is GATOR complex protein Iml1.